We begin with the raw amino-acid sequence, 250 residues long: Envelope glycoprotein L (250 aa).

A signal peptide spans 1-18; sequence MELLLFVMSLILLTFSKA. Residues 31 to 239 form the gL betaherpesvirus-type domain; it reads KLDDCIAAVI…EAYNSKLPFR (209 aa). Cys-136 and Cys-141 form a disulfide bridge.

The protein belongs to the herpesviridae glycoprotein L (gL) family. Betaherpesvirinae gL subfamily. In terms of assembly, interacts with glycoprotein H (gH); this interaction is necessary for the correct processing and cell surface expression of gH. Part of a gH-gL-gO complex.

The protein resides in the virion membrane. The protein localises to the host cell membrane. Its subcellular location is the host Golgi apparatus. It localises to the host trans-Golgi network. The heterodimer glycoprotein H-glycoprotein L is required for the fusion of viral and plasma membranes leading to virus entry into the host cell. Acts as a functional inhibitor of gH and maintains gH in an inhibited form. Upon binding to host integrins, gL dissociates from gH leading to activation of the viral fusion glycoproteins gB and gH. This chain is Envelope glycoprotein L, found in Homo sapiens (Human).